The following is a 207-amino-acid chain: Na(+)-translocating ferredoxin:NAD(+) oxidoreductase complex subunit G (207 aa).

A helical membrane pass occupies residues 18–38; the sequence is GLILFVISAVAACALALTNYV. At T185 the chain carries FMN phosphoryl threonine.

It belongs to the RnfG family. In terms of assembly, the complex is composed of six subunits: RnfA, RnfB, RnfC, RnfD, RnfE and RnfG. The cofactor is FMN.

The protein resides in the cell membrane. It carries out the reaction 2 reduced [2Fe-2S]-[ferredoxin] + Na(+)(in) + NAD(+) + H(+) = 2 oxidized [2Fe-2S]-[ferredoxin] + Na(+)(out) + NADH. In terms of biological role, part of a membrane-bound complex that couples electron transfer with translocation of ions across the membrane. Couples electron transfer from reduced ferredoxin to NAD(+) with electrogenic movement of Na(+) out of the cell. Involved in caffeate respiration. The chain is Na(+)-translocating ferredoxin:NAD(+) oxidoreductase complex subunit G from Acetobacterium woodii (strain ATCC 29683 / DSM 1030 / JCM 2381 / KCTC 1655 / WB1).